A 463-amino-acid chain; its full sequence is Ribosomal protein uS12 methylthiotransferase RimO (463 aa).

Positions 15-130 constitute an MTTase N-terminal domain; sequence PKVGMVSLGC…VMQAVHSHLP (116 aa). The [4Fe-4S] cluster site is built by C24, C60, C89, C161, C165, and C168. The 246-residue stretch at 147 to 392 folds into the Radical SAM core domain; sequence LTPRHYAYLK…MEVAEEVSAA (246 aa). The TRAM domain occupies 395–463; sequence ARKIGKTLKV…ADGHDLWGEV (69 aa).

Belongs to the methylthiotransferase family. RimO subfamily. [4Fe-4S] cluster is required as a cofactor.

Its subcellular location is the cytoplasm. It carries out the reaction L-aspartate(89)-[ribosomal protein uS12]-hydrogen + (sulfur carrier)-SH + AH2 + 2 S-adenosyl-L-methionine = 3-methylsulfanyl-L-aspartate(89)-[ribosomal protein uS12]-hydrogen + (sulfur carrier)-H + 5'-deoxyadenosine + L-methionine + A + S-adenosyl-L-homocysteine + 2 H(+). Functionally, catalyzes the methylthiolation of an aspartic acid residue of ribosomal protein uS12. The sequence is that of Ribosomal protein uS12 methylthiotransferase RimO from Burkholderia mallei (strain NCTC 10229).